Consider the following 523-residue polypeptide: 2-isopropylmalate synthase (523 aa).

The Pyruvate carboxyltransferase domain maps to V5 to W267. Residues D14, H202, H204, and N238 each coordinate Mn(2+). A regulatory domain region spans residues R392–V523.

The protein belongs to the alpha-IPM synthase/homocitrate synthase family. LeuA type 1 subfamily. As to quaternary structure, homodimer. Requires Mn(2+) as cofactor.

It is found in the cytoplasm. The enzyme catalyses 3-methyl-2-oxobutanoate + acetyl-CoA + H2O = (2S)-2-isopropylmalate + CoA + H(+). It participates in amino-acid biosynthesis; L-leucine biosynthesis; L-leucine from 3-methyl-2-oxobutanoate: step 1/4. In terms of biological role, catalyzes the condensation of the acetyl group of acetyl-CoA with 3-methyl-2-oxobutanoate (2-ketoisovalerate) to form 3-carboxy-3-hydroxy-4-methylpentanoate (2-isopropylmalate). The polypeptide is 2-isopropylmalate synthase (Salmonella newport (strain SL254)).